The following is a 369-amino-acid chain: Phospho-N-acetylmuramoyl-pentapeptide-transferase (369 aa).

10 consecutive transmembrane segments (helical) span residues 13–33 (ISGI…ALTL), 49–69 (LPLL…VPLL), 95–115 (MGGI…SNFA), 119–139 (LAVS…DWQI), 154–174 (LALQ…NQPA), 183–203 (WVSF…FVLV), 215–235 (IDGL…AIVA), 237–257 (TSPA…GFLA), 281–301 (AVAL…IFFV), and 346–366 (VVSS…AIAS).

Belongs to the glycosyltransferase 4 family. MraY subfamily. The cofactor is Mg(2+).

It is found in the cell inner membrane. It carries out the reaction UDP-N-acetyl-alpha-D-muramoyl-L-alanyl-gamma-D-glutamyl-meso-2,6-diaminopimeloyl-D-alanyl-D-alanine + di-trans,octa-cis-undecaprenyl phosphate = di-trans,octa-cis-undecaprenyl diphospho-N-acetyl-alpha-D-muramoyl-L-alanyl-D-glutamyl-meso-2,6-diaminopimeloyl-D-alanyl-D-alanine + UMP. Its pathway is cell wall biogenesis; peptidoglycan biosynthesis. In terms of biological role, catalyzes the initial step of the lipid cycle reactions in the biosynthesis of the cell wall peptidoglycan: transfers peptidoglycan precursor phospho-MurNAc-pentapeptide from UDP-MurNAc-pentapeptide onto the lipid carrier undecaprenyl phosphate, yielding undecaprenyl-pyrophosphoryl-MurNAc-pentapeptide, known as lipid I. This Nostoc sp. (strain PCC 7120 / SAG 25.82 / UTEX 2576) protein is Phospho-N-acetylmuramoyl-pentapeptide-transferase.